Consider the following 55-residue polypeptide: Potassium channel toxin alpha-KTx 17.1 (55 aa).

The N-terminal stretch at 1-23 is a signal peptide; that stretch reads MKFIIVLILISVLIATIVPVNEA. Glutamine 24 carries the post-translational modification Pyrrolidone carboxylic acid. Cystine bridges form between cysteine 27/cysteine 43, cysteine 33/cysteine 48, and cysteine 37/cysteine 50. A Threonine amide modification is found at threonine 53.

Belongs to the short scorpion toxin superfamily. Potassium channel inhibitor family. Alpha-KTx 17 subfamily. As to expression, expressed by the venom gland.

The protein resides in the secreted. Functionally, blocker of potassium channels, which inhibits both the delayed rectifier and fast transient potassium current. The inhibition is reversible and voltage-independent. It causes a depolarizing shift of the steady-state activation curve of the currents, without changing their steady-state inactivation behavior. This is Potassium channel toxin alpha-KTx 17.1 from Olivierus martensii (Manchurian scorpion).